A 500-amino-acid chain; its full sequence is L-arabinose isomerase (500 aa).

Positions 306, 333, 350, and 450 each coordinate Mn(2+).

It belongs to the arabinose isomerase family. In terms of assembly, homohexamer. The cofactor is Mn(2+).

The catalysed reaction is beta-L-arabinopyranose = L-ribulose. The protein operates within carbohydrate degradation; L-arabinose degradation via L-ribulose; D-xylulose 5-phosphate from L-arabinose (bacterial route): step 1/3. In terms of biological role, catalyzes the conversion of L-arabinose to L-ribulose. The protein is L-arabinose isomerase of Escherichia coli O17:K52:H18 (strain UMN026 / ExPEC).